Consider the following 170-residue polypeptide: MAYELPQLPYAYDALEPHIDAKTXEIHHSKHHNTYVTNLNAAVEGTEFADKDINDLIAMLDALPADKQTAVRNNGGGHANHTLFWEVIAPGGSNTPVGEVAKAIDAKFGSFDAFKEEFAKAATTRFGSGWAWLIVDGDSVAVTSTPNQDSPVMEGKTPVLGLDVWEHAYY.

Fe cation-binding residues include His27, His81, Asp163, and His167.

The protein belongs to the iron/manganese superoxide dismutase family. In terms of assembly, homodimer. Requires Fe cation as cofactor.

It carries out the reaction 2 superoxide + 2 H(+) = H2O2 + O2. Destroys superoxide anion radicals which are normally produced within the cells and which are toxic to biological systems. The polypeptide is Superoxide dismutase [Fe] (sodA) (Raoultella planticola (Klebsiella planticola)).